A 440-amino-acid polypeptide reads, in one-letter code: UDP-N-acetylmuramoylalanine--D-glutamate ligase (440 aa).

113–119 lines the ATP pocket; sequence GTNGKST.

It belongs to the MurCDEF family.

It is found in the cytoplasm. It carries out the reaction UDP-N-acetyl-alpha-D-muramoyl-L-alanine + D-glutamate + ATP = UDP-N-acetyl-alpha-D-muramoyl-L-alanyl-D-glutamate + ADP + phosphate + H(+). Its pathway is cell wall biogenesis; peptidoglycan biosynthesis. Functionally, cell wall formation. Catalyzes the addition of glutamate to the nucleotide precursor UDP-N-acetylmuramoyl-L-alanine (UMA). This chain is UDP-N-acetylmuramoylalanine--D-glutamate ligase, found in Buchnera aphidicola subsp. Acyrthosiphon pisum (strain Tuc7).